A 604-amino-acid polypeptide reads, in one-letter code: Serine/threonine-protein phosphatase 2B catalytic subunit A2 (604 aa).

The tract at residues 21 to 48 (NKTERPQSSTTPIDSKASTVAAANSTAT) is disordered. Thr-31 carries the post-translational modification Phosphothreonine. Residues 35-48 (SKASTVAAANSTAT) show a composition bias toward low complexity. Fe cation contacts are provided by Asp-144, His-146, and Asp-172. Zn(2+) contacts are provided by Asp-172 and Asn-204. The Proton donor role is filled by His-205. Positions 253 and 359 each coordinate Zn(2+). The segment at 470–497 (KKLPQAGKSEATPQPATSASPKHASILD) is disordered. Over residues 480–489 (ATPQPATSAS) the composition is skewed to polar residues. Ser-489 and Ser-520 each carry phosphoserine. Residues 501 to 523 (RRKALRNKILAVAKVSRMYSVLR) are calmodulin-binding.

The protein belongs to the PPP phosphatase family. PP-2B subfamily. Composed of two components (A and B), the A component is the catalytic subunit and the B component confers calcium sensitivity. Fe(3+) is required as a cofactor. Zn(2+) serves as cofactor.

The catalysed reaction is O-phospho-L-seryl-[protein] + H2O = L-seryl-[protein] + phosphate. It carries out the reaction O-phospho-L-threonyl-[protein] + H2O = L-threonyl-[protein] + phosphate. Functionally, calcium-dependent, calmodulin-stimulated protein phosphatase. This subunit may have a role in the calmodulin activation of calcineurin. This chain is Serine/threonine-protein phosphatase 2B catalytic subunit A2 (CMP2), found in Saccharomyces cerevisiae (strain ATCC 204508 / S288c) (Baker's yeast).